The following is a 184-amino-acid chain: ATP synthase subunit b, chloroplastic (184 aa).

Residues 27–49 (LATNPINLSVVFGVLIFFGKGVL) form a helical membrane-spanning segment.

This sequence belongs to the ATPase B chain family. In terms of assembly, F-type ATPases have 2 components, F(1) - the catalytic core - and F(0) - the membrane proton channel. F(1) has five subunits: alpha(3), beta(3), gamma(1), delta(1), epsilon(1). F(0) has four main subunits: a(1), b(1), b'(1) and c(10-14). The alpha and beta chains form an alternating ring which encloses part of the gamma chain. F(1) is attached to F(0) by a central stalk formed by the gamma and epsilon chains, while a peripheral stalk is formed by the delta, b and b' chains.

Its subcellular location is the plastid. The protein resides in the chloroplast thylakoid membrane. Its function is as follows. F(1)F(0) ATP synthase produces ATP from ADP in the presence of a proton or sodium gradient. F-type ATPases consist of two structural domains, F(1) containing the extramembraneous catalytic core and F(0) containing the membrane proton channel, linked together by a central stalk and a peripheral stalk. During catalysis, ATP synthesis in the catalytic domain of F(1) is coupled via a rotary mechanism of the central stalk subunits to proton translocation. Functionally, component of the F(0) channel, it forms part of the peripheral stalk, linking F(1) to F(0). The polypeptide is ATP synthase subunit b, chloroplastic (Crucihimalaya wallichii (Rock-cress)).